We begin with the raw amino-acid sequence, 370 residues long: Cyclic AMP-responsive element-binding protein 3-like protein 4 (370 aa).

The segment at 1 to 55 is required for transcriptional activation; sequence MELGCPELLEPPEDIFSTGSFLELGFNGPASKVPVTRGLQKSEPDDFLNLFIDPN. The Cytoplasmic segment spans residues 1–271; it reads MELGCPELLE…QTSSRAAQTS (271 aa). Residues 61–85 form a disordered region; sequence ETSPGRDSGVSEDPGSPAQQASSSP. The segment covering 76-85 has biased composition (low complexity); the sequence is SPAQQASSSP. The bZIP domain maps to 193 to 256; the sequence is ILKKIRRKIR…IFLMEQVRQL (64 aa). Residues 195-234 form a basic motif region; the sequence is KKIRRKIRNKQSAQDSRRRKKEYLDGLESRVAACSEQNQK. The interval 235–256 is leucine-zipper; sequence LQRKVQELERQNIFLMEQVRQL. Residues 272 to 292 form a helical; Signal-anchor for type II membrane protein membrane-spanning segment; it reads TCVLILLFSLALIILPSFSPF. The Lumenal portion of the chain corresponds to 293-370; sequence QGQSEARPED…IRGMVHTDEM (78 aa). 2 N-linked (GlcNAc...) asparagine glycosylation sites follow: Asn318 and Asn342.

The protein belongs to the bZIP family. ATF subfamily. As to quaternary structure, binds DNA as a dimer. Forms a heterodimer with CREM isoform Tau. Controlled by regulated intramembrane proteolysis (RIP). Following ER stress a fragment containing the cytoplasmic transcription factor domain is released by proteolysis. The cleavage seems to be performed sequentially by site-1 and site-2 proteases (PS1 and PS2). PS1 cleavage may be suppressed by a determinant in the C-terminal region. As to expression, predominantly expressed at high levels in testis with isoform 2 being the predominant isoform. Specifically expressed in postmeiotic spermatids and accumulates in the mid/late stage (at protein level). Ubiquitously expressed at low levels.

It localises to the endoplasmic reticulum membrane. Its subcellular location is the cytoplasmic vesicle. It is found in the secretory vesicle. The protein resides in the acrosome inner membrane. The protein localises to the nucleus. Functionally, transcriptional activator that may play a role in the unfolded protein response of the testis. Proposed to be involved in spermiogenesis. May be involved in regulating the maturation of sperm head nuclei. Alternatively proposed to be a paternally delivered transcription factor that may function in early zygotic gene activation. Increases the binding of CREM isoform Tau with CRE. The CREM isoform Tau-CREB3L4 heterodimer functions through CRE but not through UPRE and may recruit HIRA to CRE to regulate histone exchange. In Mus musculus (Mouse), this protein is Cyclic AMP-responsive element-binding protein 3-like protein 4 (Creb3l4).